We begin with the raw amino-acid sequence, 1205 residues long: Partitioning defective 3 homolog B (1205 aa).

2 disordered regions span residues 83-104 (EPLHKIESPSGNPADRQSPDAF) and 137-165 (VRRSSDPVPGPPADTQPSASHPGGQSLKL). S100 bears the Phosphoserine mark. A PDZ 1 domain is found at 201 to 289 (TRTVEISGEG…SPSVLLHVLP (89 aa)). Residues 318–374 (VPPPVHGKSGLKTANLTGTDSPETDASASLQQNKSPRVPRLGGKPSSPSLSPLMGFG) form a disordered region. The span at 329 to 352 (KTANLTGTDSPETDASASLQQNKS) shows a compositional bias: polar residues. Phosphoserine occurs at positions 346, 352, and 368. Residues 356-374 (PRLGGKPSSPSLSPLMGFG) show a composition bias toward low complexity. 2 PDZ domains span residues 383–468 (KIDL…VIAR) and 498–585 (EIPL…GMIQ). A phosphoserine mark is found at S635, S710, S728, S730, S746, S749, and S801. Residues 707–743 (ASKSMDLVPDESKVHSLAGQKSESPSKDFGPTLGLKK) form a disordered region. Disordered regions lie at residues 784 to 921 (AIDK…KHQE) and 1111 to 1205 (PYYP…TAAV). A compositionally biased stretch (polar residues) spans 806–822 (HSGQGALNCESAPQGNS). Composition is skewed to basic and acidic residues over residues 838–865 (KEKEKKKEKGKLKVKEKKRKEENEDPER) and 881–921 (KKED…KHQE). A Phosphoserine modification is found at S1184.

It belongs to the PAR3 family. Interacts with PARD6B. Interacts with INSC/inscuteable. Highly expressed in kidney, lung and skeletal muscle. Expressed at intermediate levels in brain, heart, placenta, liver and pancreas. Isoform 1 is predominant, while isoform 2 and isoform 3 are expressed at lower levels.

The protein resides in the endomembrane system. The protein localises to the cell junction. It is found in the tight junction. Its function is as follows. Putative adapter protein involved in asymmetrical cell division and cell polarization processes. May play a role in the formation of epithelial tight junctions. The sequence is that of Partitioning defective 3 homolog B (PARD3B) from Homo sapiens (Human).